Consider the following 261-residue polypeptide: Complex I assembly factor TIMMDC1, mitochondrial (261 aa).

3 helical membrane passes run 67–87 (LNSV…YGGV), 131–151 (WGWR…CMSV), and 183–203 (AGGI…LLLM).

Belongs to the Tim17/Tim22/Tim23 family. Associates with complex I assembly intermediates during its biogenesis in a NdufAF3 and NdufAF4 dependent manner.

It localises to the membrane. Chaperone protein involved in the assembly of the mitochondrial NADH:ubiquinone oxidoreductase complex (complex I). Essential for viability. The protein is Complex I assembly factor TIMMDC1, mitochondrial of Drosophila melanogaster (Fruit fly).